The sequence spans 201 residues: ATP-dependent Clp protease proteolytic subunit (201 aa).

Catalysis depends on Ser-98, which acts as the Nucleophile. His-123 is a catalytic residue.

It belongs to the peptidase S14 family. Fourteen ClpP subunits assemble into 2 heptameric rings which stack back to back to give a disk-like structure with a central cavity, resembling the structure of eukaryotic proteasomes.

It localises to the cytoplasm. The catalysed reaction is Hydrolysis of proteins to small peptides in the presence of ATP and magnesium. alpha-casein is the usual test substrate. In the absence of ATP, only oligopeptides shorter than five residues are hydrolyzed (such as succinyl-Leu-Tyr-|-NHMec, and Leu-Tyr-Leu-|-Tyr-Trp, in which cleavage of the -Tyr-|-Leu- and -Tyr-|-Trp bonds also occurs).. Functionally, cleaves peptides in various proteins in a process that requires ATP hydrolysis. Has a chymotrypsin-like activity. Plays a major role in the degradation of misfolded proteins. This is ATP-dependent Clp protease proteolytic subunit from Rickettsia typhi (strain ATCC VR-144 / Wilmington).